The primary structure comprises 107 residues: Iron-sulfur cluster assembly protein CyaY (107 aa).

It belongs to the frataxin family.

Functionally, involved in iron-sulfur (Fe-S) cluster assembly. May act as a regulator of Fe-S biogenesis. The chain is Iron-sulfur cluster assembly protein CyaY from Enterobacter sp. (strain 638).